The chain runs to 584 residues: Mitochondrial sodium/calcium exchanger protein (584 aa).

A signal peptide spans methionine 1–glycine 26. Over threonine 27–leucine 95 the chain is Extracellular. N-linked (GlcNAc...) asparagine glycosylation is present at asparagine 60. A helical transmembrane segment spans residues leucine 96 to valine 116. Topologically, residues threonine 117 to alanine 140 are cytoplasmic. Residues glycine 141 to phenylalanine 161 traverse the membrane as a helical segment. Topologically, residues serine 162–glycine 168 are extracellular. A helical membrane pass occupies residues leucine 169 to isoleucine 189. Residues threonine 190–arginine 200 lie on the Cytoplasmic side of the membrane. A helical transmembrane segment spans residues proline 201–phenylalanine 221. The Extracellular portion of the chain corresponds to arginine 222–threonine 226. Residues leucine 227–cysteine 247 traverse the membrane as a helical segment. Residues threonine 248–lysine 325 lie on the Cytoplasmic side of the membrane. Serine 258 bears the Phosphoserine; by PKA mark. A helical transmembrane segment spans residues alanine 326 to aspartate 346. Over proline 347–cysteine 360 the chain is Extracellular. The helical transmembrane segment at leucine 361 to valine 381 threads the bilayer. Over tyrosine 382–glutamate 383 the chain is Cytoplasmic. Residues isoleucine 384–valine 404 traverse the membrane as a helical segment. Over threonine 405–arginine 416 the chain is Extracellular. The helical transmembrane segment at leucine 417–alanine 437 threads the bilayer. Residues threonine 438–arginine 445 are Cytoplasmic-facing. A helical transmembrane segment spans residues serine 446 to glycine 466. Residues asparagine 467–alanine 487 are Extracellular-facing. A helical membrane pass occupies residues phenylalanine 488–leucine 508. Over leucine 509–glycine 524 the chain is Cytoplasmic. Residues leucine 525–valine 545 traverse the membrane as a helical segment. Residues proline 546 to phenylalanine 558 are Extracellular-facing. The chain crosses the membrane as a helical span at residues cysteine 559–isoleucine 579. Topologically, residues histidine 580 to methionine 584 are cytoplasmic.

This sequence belongs to the Ca(2+):cation antiporter (CaCA) (TC 2.A.19) family. SLC24A subfamily. Phosphorylation at Ser-258 by PKA prevents calcium overload. In terms of tissue distribution, present in pancreatic beta-cells (at protein level).

Its subcellular location is the mitochondrion inner membrane. It carries out the reaction Ca(2+)(in) + 3 Na(+)(out) = Ca(2+)(out) + 3 Na(+)(in). The catalysed reaction is 3 Li(+)(out) + Ca(2+)(in) = 3 Li(+)(in) + Ca(2+)(out). Inhibited by the sodium/calcium exchanger inhibitor CGP-37157. Strongly inhibited by zinc. Mitochondrial sodium/calcium antiporter that mediates sodium-dependent calcium efflux from mitochondrion, by mediating the exchange of 3 sodium ions per 1 calcium ion. Plays a central role in mitochondrial calcium homeostasis by mediating mitochondrial calcium extrusion: calcium efflux is essential for mitochondrial function and cell survival, notably in cardiomyocytes. Regulates rates of glucose-dependent insulin secretion in pancreatic beta-cells during the first phase of insulin secretion: acts by mediating efflux of calcium from mitochondrion, thereby affecting cytoplasmic calcium responses. Required for store-operated Ca(2+) entry (SOCE) and Ca(2+) release-activated Ca(2+) (CRAC) channel regulation: sodium transport by SLC8B1 leads to promote calcium-shuttling that modulates mitochondrial redox status, thereby regulating SOCE activity. Involved in B-lymphocyte chemotaxis. Able to transport Ca(2+) in exchange of either Li(+) or Na(+), explaining how Li(+) catalyzes Ca(2+) exchange. In contrast to other members of the family its function is independent of K(+). In Homo sapiens (Human), this protein is Mitochondrial sodium/calcium exchanger protein.